The primary structure comprises 176 residues: ATP synthase subunit delta (176 aa).

The protein belongs to the ATPase delta chain family. As to quaternary structure, F-type ATPases have 2 components, F(1) - the catalytic core - and F(0) - the membrane proton channel. F(1) has five subunits: alpha(3), beta(3), gamma(1), delta(1), epsilon(1). F(0) has three main subunits: a(1), b(2) and c(10-14). The alpha and beta chains form an alternating ring which encloses part of the gamma chain. F(1) is attached to F(0) by a central stalk formed by the gamma and epsilon chains, while a peripheral stalk is formed by the delta and b chains.

It is found in the cell inner membrane. F(1)F(0) ATP synthase produces ATP from ADP in the presence of a proton or sodium gradient. F-type ATPases consist of two structural domains, F(1) containing the extramembraneous catalytic core and F(0) containing the membrane proton channel, linked together by a central stalk and a peripheral stalk. During catalysis, ATP synthesis in the catalytic domain of F(1) is coupled via a rotary mechanism of the central stalk subunits to proton translocation. Its function is as follows. This protein is part of the stalk that links CF(0) to CF(1). It either transmits conformational changes from CF(0) to CF(1) or is implicated in proton conduction. This is ATP synthase subunit delta from Campylobacter concisus (strain 13826).